The chain runs to 156 residues: ATP synthase subunit b (156 aa).

A helical transmembrane segment spans residues 7–29 (LIGQLIAFALFTWFCVKFVWPPI).

The protein belongs to the ATPase B chain family. In terms of assembly, F-type ATPases have 2 components, F(1) - the catalytic core - and F(0) - the membrane proton channel. F(1) has five subunits: alpha(3), beta(3), gamma(1), delta(1), epsilon(1). F(0) has three main subunits: a(1), b(2) and c(10-14). The alpha and beta chains form an alternating ring which encloses part of the gamma chain. F(1) is attached to F(0) by a central stalk formed by the gamma and epsilon chains, while a peripheral stalk is formed by the delta and b chains.

The protein localises to the cell inner membrane. Functionally, f(1)F(0) ATP synthase produces ATP from ADP in the presence of a proton or sodium gradient. F-type ATPases consist of two structural domains, F(1) containing the extramembraneous catalytic core and F(0) containing the membrane proton channel, linked together by a central stalk and a peripheral stalk. During catalysis, ATP synthesis in the catalytic domain of F(1) is coupled via a rotary mechanism of the central stalk subunits to proton translocation. In terms of biological role, component of the F(0) channel, it forms part of the peripheral stalk, linking F(1) to F(0). The protein is ATP synthase subunit b of Mannheimia succiniciproducens (strain KCTC 0769BP / MBEL55E).